Reading from the N-terminus, the 362-residue chain is Homeobox protein extradenticle (362 aa).

Residues 34 to 225 enclose the PBC domain; that stretch reads PRKQDIGEIL…VMILRSRFLD (192 aa). The segment at 41–120 is PBC-A; the sequence is EILQQIMNIT…EGVAGPEKGG (80 aa). Residues 123–225 are PBC-B; it reads DFLSQSDLTG…VMILRSRFLD (103 aa). A DNA-binding region (homeobox; TALE-type) is located at residues 226 to 288; that stretch reads ARRKRRNFSK…NKRIRYKKNI (63 aa). The disordered stretch occupies residues 305–362; the sequence is GASPYSMGGPPSGAATPMMSPAPAQDSMGYSLGSGGYDQQQPYDGSMGYDQLHQDLSP.

Belongs to the TALE/PBX homeobox family.

The protein localises to the nucleus. In terms of biological role, transcription factor which acts with the selector homeodomain proteins altering the regulation of downstream target genes such as wingless (wg), teashirt (tsh) and decapentaplegic (dpp), thus affecting segmental identity. In Anopheles gambiae (African malaria mosquito), this protein is Homeobox protein extradenticle.